Here is a 222-residue protein sequence, read N- to C-terminus: Large ribosomal subunit protein uL4 (222 aa).

The segment at 67 to 87 (QKGTGNARAGSKRTNVRRGGG) is disordered.

Belongs to the universal ribosomal protein uL4 family. As to quaternary structure, part of the 50S ribosomal subunit.

In terms of biological role, one of the primary rRNA binding proteins, this protein initially binds near the 5'-end of the 23S rRNA. It is important during the early stages of 50S assembly. It makes multiple contacts with different domains of the 23S rRNA in the assembled 50S subunit and ribosome. Forms part of the polypeptide exit tunnel. The protein is Large ribosomal subunit protein uL4 of Rhodopirellula baltica (strain DSM 10527 / NCIMB 13988 / SH1).